We begin with the raw amino-acid sequence, 4731 residues long: Dynein axonemal heavy chain 8 (4731 aa).

The tract at residues methionine 1 to isoleucine 145 is disordered. The segment covering glutamate 9–threonine 55 has biased composition (pro residues). Positions glutamate 66 to leucine 75 are enriched in basic and acidic residues. The span at serine 94–serine 106 shows a compositional bias: acidic residues. The segment covering serine 122–arginine 133 has biased composition (polar residues). Residues isoleucine 145–lysine 169 are a coiled coil. Position 917 is a phosphoserine (serine 917). The tract at residues phenylalanine 1177 to phenylalanine 1201 is disordered. Residues aspartate 1543–leucine 1567 adopt a coiled-coil conformation. AAA regions lie at residues tyrosine 2049–threonine 2271, serine 2331–leucine 2550, phenylalanine 2657–glycine 2910, and glutamine 3021–arginine 3275. ATP is bound by residues glycine 2087 to threonine 2094 and glycine 2369 to threonine 2376. The segment at tyrosine 3290–cysteine 3587 is stalk. Coiled coils occupy residues aspartate 3313 to threonine 3405, leucine 3531 to aspartate 3583, and arginine 3836 to leucine 3871. 2 AAA regions span residues leucine 3673–glutamate 3903 and alanine 4118–asparagine 4332.

It belongs to the dynein heavy chain family. As to quaternary structure, consists of at least two heavy chains and a number of intermediate and light chains. As to expression, isoform 1 and/or isoform 2 are expressed in spermatocytes and mature sperm (at protein level). Testis-specific. Accumulates exclusively in mid to late spermatocytes.

Its subcellular location is the cytoplasm. The protein resides in the cytoskeleton. It is found in the flagellum axoneme. Its function is as follows. Force generating protein component of the outer dynein arms (ODAs) in the sperm flagellum. Produces force towards the minus ends of microtubules. Dynein has ATPase activity; the force-producing power stroke is thought to occur on release of ADP. Involved in sperm motility; implicated in sperm flagellar assembly. The sequence is that of Dynein axonemal heavy chain 8 (Dnah8) from Mus musculus (Mouse).